Reading from the N-terminus, the 152-residue chain is Transcriptional regulator MraZ (152 aa).

SpoVT-AbrB domains are found at residues 5-52 (ASAI…PFDE) and 81-124 (AHEC…DETA).

The protein belongs to the MraZ family. In terms of assembly, forms oligomers.

The protein resides in the cytoplasm. It localises to the nucleoid. In Shewanella sediminis (strain HAW-EB3), this protein is Transcriptional regulator MraZ.